Reading from the N-terminus, the 585-residue chain is Chaperonin GroEL, chloroplastic (585 aa).

Residues 55–58 (TLGP), 113–117 (DGTTT), G442, 507–509 (NAA), and D523 contribute to the ATP site.

It belongs to the chaperonin (HSP60) family. In terms of assembly, forms a cylinder of 14 subunits composed of two heptameric rings stacked back-to-back. Interacts with the co-chaperonin GroES.

It localises to the plastid. The protein resides in the chloroplast. The catalysed reaction is ATP + H2O + a folded polypeptide = ADP + phosphate + an unfolded polypeptide.. Its function is as follows. Together with its co-chaperonin GroES, plays an essential role in assisting protein folding. The GroEL-GroES system forms a nano-cage that allows encapsulation of the non-native substrate proteins and provides a physical environment optimized to promote and accelerate protein folding. This chain is Chaperonin GroEL, chloroplastic, found in Pyrenomonas salina.